The chain runs to 905 residues: Microtubule-associated protein 10 (905 aa).

Disordered stretches follow at residues 30 to 51 (AAAV…SSPR), 199 to 235 (TRTG…KPLG), 329 to 362 (APEE…AHEH), 434 to 458 (SPES…GGCE), 547 to 586 (SSAE…FDEP), 721 to 772 (RSFK…GSPV), and 786 to 855 (KSLE…SSYL). Over residues 34–43 (EQEEEEEEKE) the composition is skewed to acidic residues. The segment covering 208–227 (SPQTQQERQQLQQPASQPSP) has biased composition (low complexity). The segment covering 443-453 (CRSEAKKDKRS) has biased composition (basic and acidic residues). Polar residues predominate over residues 567-579 (ASFTENSDTSRQI). Basic and acidic residues predominate over residues 721-736 (RSFKAHDSSSRTENPK). Residues 737–748 (HSQYTSKSSDTG) show a composition bias toward polar residues. A compositionally biased stretch (low complexity) spans 790 to 801 (EASSISASDLSS). A compositionally biased stretch (polar residues) spans 830 to 855 (SVKTRSSWKSLEKSQSPQTSQVSSYL).

In terms of assembly, interacts (via middle region) with microtubules. In terms of tissue distribution, expressed in different cell lines (at protein level).

The protein localises to the cytoplasm. It localises to the cytoskeleton. The protein resides in the spindle pole. It is found in the microtubule organizing center. Its subcellular location is the centrosome. The protein localises to the midbody. Functionally, microtubule-associated protein (MAP) that plays a role in the regulation of cell division; promotes microtubule stability and participates in the organization of the spindle midzone and normal progress of cytokinesis. This Homo sapiens (Human) protein is Microtubule-associated protein 10 (MAP10).